Reading from the N-terminus, the 948-residue chain is Probable DNA-directed RNA polymerase (948 aa).

Residues D600, K680, and D853 contribute to the active site.

It belongs to the phage and mitochondrial RNA polymerase family.

The protein localises to the mitochondrion. It carries out the reaction RNA(n) + a ribonucleoside 5'-triphosphate = RNA(n+1) + diphosphate. Functionally, DNA-dependent RNA polymerase catalyzes the transcription of DNA into RNA using the four ribonucleoside triphosphates as substrates. This Podospora anserina (Pleurage anserina) protein is Probable DNA-directed RNA polymerase.